The sequence spans 314 residues: tRNA dimethylallyltransferase 2 (314 aa).

8–15 (GPTGTGKS) serves as a coordination point for ATP. 10–15 (TGTGKS) is a substrate binding site.

This sequence belongs to the IPP transferase family. In terms of assembly, monomer. Mg(2+) serves as cofactor.

It carries out the reaction adenosine(37) in tRNA + dimethylallyl diphosphate = N(6)-dimethylallyladenosine(37) in tRNA + diphosphate. Catalyzes the transfer of a dimethylallyl group onto the adenine at position 37 in tRNAs that read codons beginning with uridine, leading to the formation of N6-(dimethylallyl)adenosine (i(6)A). The protein is tRNA dimethylallyltransferase 2 of Mycobacterium ulcerans (strain Agy99).